Reading from the N-terminus, the 149-residue chain is Urease accessory protein UreE (149 aa).

Belongs to the UreE family.

The protein localises to the cytoplasm. Its function is as follows. Involved in urease metallocenter assembly. Binds nickel. Probably functions as a nickel donor during metallocenter assembly. The polypeptide is Urease accessory protein UreE (Ureaplasma urealyticum serovar 10 (strain ATCC 33699 / Western)).